The primary structure comprises 297 residues: uncharacterized protein (297 aa).

The next 9 membrane-spanning stretches (helical) occupy residues 1–21, 32–52, 72–92, 98–118, 120–140, 194–214, 218–238, 253–273, and 274–294; these read MSWIIFYTIIAALLILDLGII, GSILLSLFYFIISCLFGIYVY, AMALDNIFIISIIFQFFNIPS, VLFFGIIGVIIFKAIIIYGGI, LIHKFSWLLYILAVILIATGI, ILIETIDLVFAIDSIAAIFAI, VYIIYTSNIFAILGLRSLFFC, LALILIFIGFKIFIHHYIEIP, and AYISLTVTISSLLFGIIASIL.

It belongs to the TerC family.

Its subcellular location is the cell membrane. This is an uncharacterized protein from Rickettsia prowazekii (strain Madrid E).